A 209-amino-acid polypeptide reads, in one-letter code: Large ribosomal subunit protein uL3 (209 aa).

Gln-150 carries the N5-methylglutamine modification.

It belongs to the universal ribosomal protein uL3 family. As to quaternary structure, part of the 50S ribosomal subunit. Forms a cluster with proteins L14 and L19. Methylated by PrmB.

In terms of biological role, one of the primary rRNA binding proteins, it binds directly near the 3'-end of the 23S rRNA, where it nucleates assembly of the 50S subunit. This chain is Large ribosomal subunit protein uL3, found in Salmonella paratyphi C (strain RKS4594).